The chain runs to 348 residues: Rhodopsin (348 aa).

Methionine 1 is subject to N-acetylmethionine. Topologically, residues 1–36 (MNGTEGPNFYVPFSNATGVVRSPFEYPQYYLAEPWQ) are extracellular. N-linked (GlcNAc...) asparagine glycans are attached at residues asparagine 2 and asparagine 15. Residues 37-61 (FSMLAAYMFLLIVLGFPINFLTLYV) traverse the membrane as a helical segment. Topologically, residues 62–73 (TVQHKKLRTPLN) are cytoplasmic. A helical transmembrane segment spans residues 74 to 96 (YILLNLAVADLFMVLGGFTSTLY). Residues 97-110 (TSLHGYFVFGPTGC) lie on the Extracellular side of the membrane. The cysteines at positions 110 and 187 are disulfide-linked. Residues 111-133 (NLEGFFATLGGEIALWSLVVLAI) traverse the membrane as a helical segment. The 'Ionic lock' involved in activated form stabilization signature appears at 134–136 (ERY). The Cytoplasmic segment spans residues 134–152 (ERYVVVCKPMSNFRFGENH). A helical membrane pass occupies residues 153 to 173 (AIMGVAFTWVMALACAAPPLA). Residues 174–202 (GWSRYIPEGLQCSCGIDYYTLKPEVNNES) are Extracellular-facing. Zn(2+) is bound at residue glutamate 201. A helical membrane pass occupies residues 203-224 (FVIYMFVVHFTIPMIIIFFCYG). Residues 225–252 (QLVFTVKEAAAQQQESATTQKAEKEVTR) are Cytoplasmic-facing. Residues 253-274 (MVIIMVIAFLICWVPYASVAFY) form a helical membrane-spanning segment. At 275-284 (IFTHQGSNFG) the chain is on the extracellular side. A Zn(2+)-binding site is contributed by glutamine 279. Residues 285-309 (PIFMTIPAFFAKSAAIYNPVIYIMM) form a helical membrane-spanning segment. Lysine 296 carries the post-translational modification N6-(retinylidene)lysine. Over 310-348 (NKQFRNCMLTTICCGKNPLGDDEASATVSKTETSQVAPA) the chain is Cytoplasmic. 2 S-palmitoyl cysteine lipidation sites follow: cysteine 322 and cysteine 323. The interaction with SAG stretch occupies residues 330–348 (DDEASATVSKTETSQVAPA). Serine 334 carries the phosphoserine modification. Threonine 336 bears the Phosphothreonine mark. Serine 338 is modified (phosphoserine). Residues threonine 340 and threonine 342 each carry the phosphothreonine modification. Serine 343 carries the phosphoserine modification.

It belongs to the G-protein coupled receptor 1 family. Opsin subfamily. In terms of assembly, homodimer. May form a complex composed of RHO, GRK1 and RCVRN in a Ca(2+)-dependent manner; RCVRN prevents the interaction between GRK1 and RHO. Interacts with GRK1. Interacts (phosphorylated form) with SAG. Interacts with GNAT1. Interacts with GNAT3. SAG and G-proteins compete for a common binding site. Interacts with PRCD; the interaction promotes PRCD stability. Forms a complex with ASAP1 and ARF4. Forms a complex with ASAP1, RAB11A, Rabin8/RAB3IP, ARF4 and RAB11FIP3; the complex regulates Golgi-to-cilia rhodopsin/RHO transport in photoreceptors. Post-translationally, phosphorylated on some or all of the serine and threonine residues present in the C-terminal region. After activation by light, phosphorylated by GRK1 (in vitro). In terms of processing, contains one covalently linked retinal chromophore. Upon light absorption, the covalently bound 11-cis-retinal is converted to all-trans-retinal. After hydrolysis of the Schiff base and release of the covalently bound all-trans-retinal, active rhodopsin is regenerated by binding of a fresh molecule of 11-cis-retinal. Rod shaped photoreceptor cells which mediate vision in dim light.

It localises to the membrane. The protein resides in the cell projection. The protein localises to the cilium. Its subcellular location is the photoreceptor outer segment. In terms of biological role, photoreceptor required for image-forming vision at low light intensity. Required for photoreceptor cell viability after birth. Light-induced isomerization of the chromophore 11-cis-retinal to all-trans-retinal triggers a conformational change that activates signaling via G-proteins. Subsequent receptor phosphorylation mediates displacement of the bound G-protein alpha subunit by the arrestin SAG and terminates signaling. The chain is Rhodopsin (RHO) from Homo sapiens (Human).